The following is a 298-amino-acid chain: Small ribosomal subunit protein uS2 (298 aa).

This sequence belongs to the universal ribosomal protein uS2 family.

This is Small ribosomal subunit protein uS2 from Leifsonia xyli subsp. xyli (strain CTCB07).